The sequence spans 110 residues: uncharacterized protein (110 aa).

A helical membrane pass occupies residues 29–49 (GLAFIFFFLVAFYFFPAFWDL).

It is found in the membrane. This is an uncharacterized protein from Saccharomyces cerevisiae (strain ATCC 204508 / S288c) (Baker's yeast).